Consider the following 666-residue polypeptide: MGQTKSKIKSKYASYLSFIKILLKRGGVKVSTKNLIKLFQIIEQFCPWFPEQGTLDLKDWKRIGKELKQAGRKGNIIPLTVWNDWAIIKAALEPFQTEKDSVSVSDALGSCIIDCNENTRKKSQKETEGLHCEYVAEPVMAQSTQNVDYNQLQEVIYPETLKLEGKGPELVGPSESKPRGTSHLPAGQVPVTLQPQKQVKENKTQPPVAYQYWPPAELQYRPPPESQYGYPGMPPAPQGRAPYPQPPTRRLNPTAPPSRQGSELHEIIDKSRKEGDTEAWQFPVTLEPMPPGEGAQEGEPPTVEARYKSFSIKMLKDMKEGVKQYGPNSPYMRTLLDSIAHGHRLIPYDWEILAKSSLSPSQFLQFKTWWIDGVQEQVRRNRAANPPVNIDADQLLGIGQNWSTISQQALMQNEAIEQVRAICLRAWEKIQDPGSTCPSFNTVRQGSKEPYPDFVARLQDVAQKSIADEKARKVIVELMAYENANPECQSAIKPLKGKVPAGSDVISEYVKACDGIGGAMHKAMLMAQAITGVVLGGQVRTFGGKCYNCGQIGHLKKNCPVLNKQNITIQATTTGREPPDLCPRCKKGKHWASQCRSKFDKNGQPLSGNEQRGQPQAPQQTGAFPIQPFVPQGFQEQQPPLSQVFQGISQLPQYNNCPPPQAAVQQ.

The N-myristoyl glycine moiety is linked to residue Gly2. Disordered stretches follow at residues 165–205 (GKGP…NKTQ) and 217–264 (ELQY…GSEL). Residues 232 to 247 (GMPPAPQGRAPYPQPP) show a composition bias toward pro residues. CCHC-type zinc fingers lie at residues 544–561 (GKCY…NCPV) and 580–597 (DLCP…QCRS). Positions 598-641 (KFDKNGQPLSGNEQRGQPQAPQQTGAFPIQPFVPQGFQEQQPPL) are disordered. The span at 604–622 (QPLSGNEQRGQPQAPQQTG) shows a compositional bias: polar residues.

Belongs to the beta type-B retroviral Gag protein family. HERV class-II K(HML-2) gag subfamily. Specific enzymatic cleavages may yield mature proteins. In terms of processing, myristoylation is essential for retroviral assembly. Alteration of the glycine residue leads to a block in the budding of particles and an accumulation of Gag inside the cell.

It localises to the cell membrane. Functionally, the products of the Gag polyproteins of infectious retroviruses perform highly complex orchestrated tasks during the assembly, budding, maturation, and infection stages of the viral replication cycle. During viral assembly, the proteins form membrane associations and self-associations that ultimately result in budding of an immature virion from the infected cell. Gag precursors also function during viral assembly to selectively bind and package two plus strands of genomic RNA. Endogenous Gag proteins may have kept, lost or modified their original function during evolution. In Homo sapiens (Human), this protein is Endogenous retrovirus group K member 7 Gag polyprotein (ERVK-7).